We begin with the raw amino-acid sequence, 363 residues long: MSDVERTEFEIPGGIPPRRNGGQGRAADTNVDANLKPDEYDAEVTLRPKSLTEFIGQPKVRDQLSLVLTGAKNRGVVPDHVLLSGPPGLGKTTMAMIIAQELGTSLRMTSGPALERAGDLAAMLSNLMEGDVLFIDEIHRIARPAEEMLYMAMEDFRIDVIVGKGPGATSIPLEIPPFTLVGATTRSGMLTGPLRDRFGFTAQMEFYDVPDLTKVVKRTAKILDVGIDNDAAVEIASRSRGTPRIANRLLRRVRDFAEVHADGHITMGAANAALIVFDVDEVGLDRLDRAVLDALIRGHGGGPVGVNTLAVAVGEEPGTVEEVCEPYLVRAGMIARTGRGRVATAAAWRHLGLEPPEGTIGDY.

The segment at 1-32 (MSDVERTEFEIPGGIPPRRNGGQGRAADTNVD) is disordered. Residues 27–207 (ADTNVDANLK…FGFTAQMEFY (181 aa)) are large ATPase domain (RuvB-L). ATP is bound by residues Leu46, Arg47, Gly88, Lys91, Thr92, Thr93, 154–156 (EDF), Arg197, Tyr207, and Arg244. Thr92 contributes to the Mg(2+) binding site. Residues 208–278 (DVPDLTKVVK…AANAALIVFD (71 aa)) form a small ATPAse domain (RuvB-S) region. Residues 281-363 (EVGLDRLDRA…EPPEGTIGDY (83 aa)) are head domain (RuvB-H). DNA-binding residues include Arg336 and Arg341.

This sequence belongs to the RuvB family. In terms of assembly, homohexamer. Forms an RuvA(8)-RuvB(12)-Holliday junction (HJ) complex. HJ DNA is sandwiched between 2 RuvA tetramers; dsDNA enters through RuvA and exits via RuvB. An RuvB hexamer assembles on each DNA strand where it exits the tetramer. Each RuvB hexamer is contacted by two RuvA subunits (via domain III) on 2 adjacent RuvB subunits; this complex drives branch migration. In the full resolvosome a probable DNA-RuvA(4)-RuvB(12)-RuvC(2) complex forms which resolves the HJ.

It is found in the cytoplasm. It catalyses the reaction ATP + H2O = ADP + phosphate + H(+). Its function is as follows. The RuvA-RuvB-RuvC complex processes Holliday junction (HJ) DNA during genetic recombination and DNA repair, while the RuvA-RuvB complex plays an important role in the rescue of blocked DNA replication forks via replication fork reversal (RFR). RuvA specifically binds to HJ cruciform DNA, conferring on it an open structure. The RuvB hexamer acts as an ATP-dependent pump, pulling dsDNA into and through the RuvAB complex. RuvB forms 2 homohexamers on either side of HJ DNA bound by 1 or 2 RuvA tetramers; 4 subunits per hexamer contact DNA at a time. Coordinated motions by a converter formed by DNA-disengaged RuvB subunits stimulates ATP hydrolysis and nucleotide exchange. Immobilization of the converter enables RuvB to convert the ATP-contained energy into a lever motion, pulling 2 nucleotides of DNA out of the RuvA tetramer per ATP hydrolyzed, thus driving DNA branch migration. The RuvB motors rotate together with the DNA substrate, which together with the progressing nucleotide cycle form the mechanistic basis for DNA recombination by continuous HJ branch migration. Branch migration allows RuvC to scan DNA until it finds its consensus sequence, where it cleaves and resolves cruciform DNA. The chain is Holliday junction branch migration complex subunit RuvB from Corynebacterium glutamicum (strain R).